We begin with the raw amino-acid sequence, 84 residues long: Peptide Ctry2346 (84 aa).

The signal sequence occupies residues 1–23 (MKTQTLLFTFSLVLLMVATQTEA). L33 is modified (leucine amide). A propeptide spanning residues 37 to 84 (GLLDNLLGKRGLLFGKRALTNQDLFDLAYDPSLSAADMDALEMLLENY) is cleaved from the precursor.

This sequence belongs to the non-disulfide-bridged peptide (NDBP) superfamily. Short antimicrobial peptide (group 4) family. Expressed by the venom gland.

It is found in the secreted. The protein resides in the target cell membrane. In terms of biological role, antimicrobial peptide. In Chaerilus tryznai (Scorpion), this protein is Peptide Ctry2346.